The sequence spans 930 residues: GPI ethanolamine phosphate transferase 1 (930 aa).

Topologically, residues 1–8 are cytoplasmic; it reads MARLGRTG. Residues 9 to 29 traverse the membrane as a helical segment; it reads FLTLAVVFHLIYAYSIFDIYF. Topologically, residues 30–466 are lumenal; it reads VSPIVSGMRP…LQTYDWLFLR (437 aa). The N-linked (GlcNAc...) asparagine glycan is linked to Asn-148. Residues 467-487 traverse the membrane as a helical segment; sequence TIVTFGYVGWIAYALTTVIHL. Topologically, residues 488-498 are cytoplasmic; it reads HVLHGASESDR. Residues 499 to 519 traverse the membrane as a helical segment; that stretch reads TTASISFFSSVLVALFSVFLY. Topologically, residues 520 to 521 are lumenal; the sequence is QG. A helical transmembrane segment spans residues 522-542; sequence SPWRYYLYGFFPIFFWEEVFA. Residues 543–569 are Cytoplasmic-facing; it reads RRKAFHAGRAGALLLPKRDLHSNKVED. Residues 570–590 traverse the membrane as a helical segment; the sequence is IDTITYGGAFMLLTGLLYLLF. Residues 591 to 611 are Lumenal-facing; it reads EDEILGTSHQPAAVSRKGSRN. Residues 612–632 traverse the membrane as a helical segment; it reads IMGLQLGMVLLALIVTRSSAA. Residues 633–639 are Cytoplasmic-facing; sequence SLQAKQG. A helical transmembrane segment spans residues 640-660; that stretch reads LPFGNQVVGWGVLIASLLLPF. Residues 661–684 are Lumenal-facing; that stretch reads AHRLYPNSHYLHRLMIIFLTFSPT. Residues 685–705 form a helical membrane-spanning segment; it reads FIILTISYEGLFYFAFCMTLV. Over 706–761 the chain is Cytoplasmic; it reads TWVRLEHATYVYTAKPVAKQAQETIEPPKKANPGATTVVDGETYRFRTLTVSDARV. Residues 762–782 form a helical membrane-spanning segment; it reads ALFFFFLLQSAFFSTGNIASI. Residues 783–803 lie on the Lumenal side of the membrane; that stretch reads SSFSLDSVYRLIPVFNPFSQG. A helical transmembrane segment spans residues 804 to 824; that stretch reads ALLILKLLIPFAIISANLGIL. The Cytoplasmic segment spans residues 825–833; the sequence is NRRLEVAPS. A helical membrane pass occupies residues 834 to 854; that stretch reads ALFMVVMAISDVMTLNFFYMV. Topologically, residues 855 to 870 are lumenal; sequence RDEGSWLDIGTTISHF. A helical membrane pass occupies residues 871 to 891; it reads CIASFLCTFVAGLEFLSEVFI. Over 892–930 the chain is Cytoplasmic; the sequence is SGVDFGLRTDAITASVPDIVNGITSKGQKDVPNGVEDKE.

This sequence belongs to the PIGG/PIGN/PIGO family. PIGN subfamily.

Its subcellular location is the endoplasmic reticulum membrane. It participates in glycolipid biosynthesis; glycosylphosphatidylinositol-anchor biosynthesis. In terms of biological role, ethanolamine phosphate transferase involved in glycosylphosphatidylinositol-anchor biosynthesis. Transfers ethanolamine phosphate to the first alpha-1,4-linked mannose of the glycosylphosphatidylinositol precursor of GPI-anchor. This Emericella nidulans (strain FGSC A4 / ATCC 38163 / CBS 112.46 / NRRL 194 / M139) (Aspergillus nidulans) protein is GPI ethanolamine phosphate transferase 1 (mcd4).